The chain runs to 142 residues: Large ribosomal subunit protein uL13 (142 aa).

This sequence belongs to the universal ribosomal protein uL13 family. Part of the 50S ribosomal subunit.

This protein is one of the early assembly proteins of the 50S ribosomal subunit, although it is not seen to bind rRNA by itself. It is important during the early stages of 50S assembly. This Histophilus somni (strain 2336) (Haemophilus somnus) protein is Large ribosomal subunit protein uL13.